The sequence spans 716 residues: Fusoxypene synthase (716 aa).

The segment at 4 to 328 is sesterterpenoid synthase; that stretch reads LSYQSRLIPP…WLSACSRQNT (325 aa). D96 provides a ligand contact to Mg(2+). D96 is a substrate binding site. The segment at 187–190 is substrate; that stretch reads RMTN. Residue N231 coordinates substrate. The interval 235–239 is substrate; that stretch reads SYERE. The interval 329 to 711 is geranylfarnesyl diphosphate synthase; the sequence is WKTNCSIDGK…CLATLSMEGC (383 aa). Isopentenyl diphosphate contacts are provided by K422, R425, and H454. The Mg(2+) site is built by D461 and D465. R470 provides a ligand contact to dimethylallyl diphosphate. R471 is a binding site for isopentenyl diphosphate. The dimethylallyl diphosphate site is built by K548, T549, Q587, N594, and K602.

It in the N-terminal section; belongs to the terpene synthase family. This sequence in the C-terminal section; belongs to the FPP/GGPP synthase family.

It catalyses the reaction 4 isopentenyl diphosphate + dimethylallyl diphosphate = (2E,6E,10E,14E)-geranylfarnesyl diphosphate + 4 diphosphate. The catalysed reaction is (2E,6E,10E,14E)-geranylfarnesyl diphosphate = fusoxypene A + diphosphate. It carries out the reaction (2E,6E,10E,14E)-geranylfarnesyl diphosphate = fusoxypene B + diphosphate. The enzyme catalyses (2E,6E,10E,14E)-geranylfarnesyl diphosphate = fusoxypene C + diphosphate. It catalyses the reaction (2E,6E,10E,14E)-geranylfarnesyl diphosphate = (-)-astellatene + diphosphate. Bifunctional sesterterpenoid synthase that performs both prenyl transferase and terpene cyclase activity, converting isopentenyl diphosphate and dimethylallyl diphosphate into geranylfarnesyl diphosphate (GFPP) and then converting GFPP into the enantiomeric sesterterpenes with a 5-6-7-3-5 ring system fusoxypene A, fusoxypene B, fusoxypene C and (-)-astellatene. The chain is Fusoxypene synthase from Fusarium oxysporum (Fusarium vascular wilt).